The sequence spans 561 residues: DNA mismatch repair protein MutL (561 aa).

This sequence belongs to the DNA mismatch repair MutL/HexB family.

Its function is as follows. This protein is involved in the repair of mismatches in DNA. It is required for dam-dependent methyl-directed DNA mismatch repair. May act as a 'molecular matchmaker', a protein that promotes the formation of a stable complex between two or more DNA-binding proteins in an ATP-dependent manner without itself being part of a final effector complex. This chain is DNA mismatch repair protein MutL, found in Rippkaea orientalis (strain PCC 8801 / RF-1) (Cyanothece sp. (strain PCC 8801)).